The following is a 256-amino-acid chain: Ciliary microtubule associated protein 1A (256 aa).

STPGR repeat units follow at residues 66-92 (PGPG…IYGR), 181-206 (PGPG…MTAR), and 217-242 (PGPG…FGIR). A disordered region spans residues 91-115 (GRPRDISSFRTPGPGSYSPERAGKS).

Belongs to the CIMAP family.

Its subcellular location is the cytoplasm. It localises to the cytoskeleton. The protein localises to the flagellum axoneme. Functionally, outer dense fibers are filamentous structures located on the outside of the axoneme in the midpiece and principal piece of the mammalian sperm tail. May help to maintain the passive elastic structures and elastic recoil of the sperm tail. The sequence is that of Ciliary microtubule associated protein 1A (cimap1a) from Xenopus laevis (African clawed frog).